The following is a 313-amino-acid chain: tRNA-cytidine(32) 2-sulfurtransferase (313 aa).

The short motif at 50–55 is the PP-loop motif element; the sequence is SGGKDS. The [4Fe-4S] cluster site is built by Cys125, Cys128, and Cys216.

This sequence belongs to the TtcA family. Homodimer. The cofactor is Mg(2+). [4Fe-4S] cluster is required as a cofactor.

It is found in the cytoplasm. The catalysed reaction is cytidine(32) in tRNA + S-sulfanyl-L-cysteinyl-[cysteine desulfurase] + AH2 + ATP = 2-thiocytidine(32) in tRNA + L-cysteinyl-[cysteine desulfurase] + A + AMP + diphosphate + H(+). The protein operates within tRNA modification. Catalyzes the ATP-dependent 2-thiolation of cytidine in position 32 of tRNA, to form 2-thiocytidine (s(2)C32). The sulfur atoms are provided by the cysteine/cysteine desulfurase (IscS) system. The chain is tRNA-cytidine(32) 2-sulfurtransferase from Haemophilus influenzae (strain ATCC 51907 / DSM 11121 / KW20 / Rd).